We begin with the raw amino-acid sequence, 968 residues long: RNA polymerase-associated protein RapA (968 aa).

In terms of domain architecture, Helicase ATP-binding spans Asp164–Asn334. Position 177 to 184 (Asp177 to Thr184) interacts with ATP. The short motif at Asp280–His283 is the DEAH box element. The region spanning Arg490–Gly662 is the Helicase C-terminal domain.

It belongs to the SNF2/RAD54 helicase family. RapA subfamily. In terms of assembly, interacts with the RNAP. Has a higher affinity for the core RNAP than for the holoenzyme. Its ATPase activity is stimulated by binding to RNAP.

In terms of biological role, transcription regulator that activates transcription by stimulating RNA polymerase (RNAP) recycling in case of stress conditions such as supercoiled DNA or high salt concentrations. Probably acts by releasing the RNAP, when it is trapped or immobilized on tightly supercoiled DNA. Does not activate transcription on linear DNA. Probably not involved in DNA repair. In Shigella sonnei (strain Ss046), this protein is RNA polymerase-associated protein RapA.